Consider the following 126-residue polypeptide: Aspartate 1-decarboxylase (126 aa).

S25 functions as the Schiff-base intermediate with substrate; via pyruvic acid in the catalytic mechanism. S25 is modified (pyruvic acid (Ser)). Position 57 (T57) interacts with substrate. The Proton donor role is filled by Y58. Position 73 to 75 (73 to 75) interacts with substrate; the sequence is GAA.

Belongs to the PanD family. As to quaternary structure, heterooctamer of four alpha and four beta subunits. It depends on pyruvate as a cofactor. In terms of processing, is synthesized initially as an inactive proenzyme, which is activated by self-cleavage at a specific serine bond to produce a beta-subunit with a hydroxyl group at its C-terminus and an alpha-subunit with a pyruvoyl group at its N-terminus.

The protein localises to the cytoplasm. It catalyses the reaction L-aspartate + H(+) = beta-alanine + CO2. The protein operates within cofactor biosynthesis; (R)-pantothenate biosynthesis; beta-alanine from L-aspartate: step 1/1. Functionally, catalyzes the pyruvoyl-dependent decarboxylation of aspartate to produce beta-alanine. The sequence is that of Aspartate 1-decarboxylase from Yersinia pestis bv. Antiqua (strain Antiqua).